Here is a 199-residue protein sequence, read N- to C-terminus: Recombination protein RecR (199 aa).

The C4-type zinc finger occupies 57 to 72 (CSICGNITEDDPCVIC). The region spanning 80-176 (STVLVVEEAK…KVTRLAHGLS (97 aa)) is the Toprim domain.

This sequence belongs to the RecR family.

Its function is as follows. May play a role in DNA repair. It seems to be involved in an RecBC-independent recombinational process of DNA repair. It may act with RecF and RecO. This chain is Recombination protein RecR, found in Lactiplantibacillus plantarum (strain ATCC BAA-793 / NCIMB 8826 / WCFS1) (Lactobacillus plantarum).